We begin with the raw amino-acid sequence, 352 residues long: NADH-ubiquinone oxidoreductase chain 2 (352 aa).

11 helical membrane passes run 4-24 (MISI…VSAE), 26-46 (WFVI…ILWF), 60-80 (FLVQ…QAWF), 96-116 (LCLS…FWLP), 124-144 (FIQG…LLFY), 150-170 (FSYF…WGGL), 178-198 (ILAF…AFSL), 205-225 (LFIY…LSIF), 241-261 (ITLV…TGFI), 274-294 (GFIF…FFYL), and 330-350 (LVSS…PLYI).

The protein belongs to the complex I subunit 2 family.

The protein localises to the mitochondrion inner membrane. The catalysed reaction is a ubiquinone + NADH + 5 H(+)(in) = a ubiquinol + NAD(+) + 4 H(+)(out). Core subunit of the mitochondrial membrane respiratory chain NADH dehydrogenase (Complex I) that is believed to belong to the minimal assembly required for catalysis. Complex I functions in the transfer of electrons from NADH to the respiratory chain. The immediate electron acceptor for the enzyme is believed to be ubiquinone. The polypeptide is NADH-ubiquinone oxidoreductase chain 2 (ND2) (Paracentrotus lividus (Common sea urchin)).